The chain runs to 125 residues: Lectin (125 aa).

The C-type lectin domain maps to 1-120 (MDYEILFSDE…CGGARRVICE (120 aa)). 2 disulfide bridges follow: Cys-21-Cys-119 and Cys-96-Cys-111.

In terms of assembly, homodimer.

Functionally, role in the defense system of the organism against microorganisms. This calcium-binding lectin binds galactose. The polypeptide is Lectin (Polyandrocarpa misakiensis (Tunicate)).